We begin with the raw amino-acid sequence, 190 residues long: MQESFENSVKNILKIIGEDPNREGLLKTPSRVYKAFKFLTSGYEEDPKEVLNDALFTSSNNEMVLMRNIEFYSLCEHHLLPIIGRVHVAYIPNGKVVGLSKIPRMVNIYARRLQIQEQMTEQIAQALAEVIEPKGVGVVVEARHMCVEMRGVQKINSTTTTSALRGCFIKNADTRREFFSLINSPQETHF.

Positions 75, 78, and 146 each coordinate Zn(2+).

It belongs to the GTP cyclohydrolase I family. Toroid-shaped homodecamer, composed of two pentamers of five dimers.

The enzyme catalyses GTP + H2O = 7,8-dihydroneopterin 3'-triphosphate + formate + H(+). Its pathway is cofactor biosynthesis; 7,8-dihydroneopterin triphosphate biosynthesis; 7,8-dihydroneopterin triphosphate from GTP: step 1/1. In Campylobacter curvus (strain 525.92), this protein is GTP cyclohydrolase 1.